Reading from the N-terminus, the 410-residue chain is MARAAGERGRAARCGRWRRGALLAFAAWTAGWVLAAALLLRAHPSVLSERCTDEKSRRILAALCQDYRRGWLTGALCEDLCVGGELLYQRCLYYERGKKVLQAQWRGRTVVLKSKREAFSSFPPLTLLEEEAGAGAPGIPEAELLLMVAGEVKNTLGLELPNNSIAPLWPARQGPGWRQQLASAWSLLQQEEYVYFSLLPDLSRHILPVLGSCGHFYAVEYLAAGSPHHKALFPLDDAGQAQAISHIALSFLDMVSHFDSDFSHRLHLCDVKPENFAIKRDFTVVAIDVDMAFFEPKMREILEQNCTGDEDCNFFDCFSKCDLRVHKCGAQRVNSNLQVICDKIFRHWFSSTHRSPAVSLQLRLQLQQAVQECAQHGGSSGNSWTASSSVFWKLRWLLQATLKELQEAEK.

The Cytoplasmic segment spans residues 1–19 (MARAAGERGRAARCGRWRR). Positions 18–19 (RR) match the May mediate ER retention motif. Residues 20 to 40 (GALLAFAAWTAGWVLAAALLL) form a helical membrane-spanning segment. Residues 41–410 (RAHPSVLSER…TLKELQEAEK (370 aa)) are Lumenal-facing.

This sequence belongs to the DIPK family. Post-translationally, among the many cysteines in the lumenal domain, most are probably involved in disulfide bonds. As to expression, mainly expressed in the brain and eye, some expression in kidney and skeletal muscle.

It localises to the endoplasmic reticulum membrane. The polypeptide is Divergent protein kinase domain 1C (Dipk1c) (Mus musculus (Mouse)).